A 325-amino-acid chain; its full sequence is uncharacterized protein (325 aa).

The tract at residues 1–32 (MKQEYIPLDEFPNKSNEGMLNDEGTSSSGLST) is disordered. The segment covering 23-32 (EGTSSSGLST) has biased composition (low complexity). The stretch at 135-223 (AEEISNLKTS…LKKREDLLRL (89 aa)) forms a coiled coil.

It localises to the cytoplasm. The protein resides in the cytoskeleton. It is found in the microtubule organizing center. The protein localises to the spindle pole body. This is an uncharacterized protein from Schizosaccharomyces pombe (strain 972 / ATCC 24843) (Fission yeast).